A 199-amino-acid polypeptide reads, in one-letter code: 7-methyl-GTP pyrophosphatase (199 aa).

Catalysis depends on Asp-73, which acts as the Proton acceptor.

Belongs to the Maf family. YceF subfamily. A divalent metal cation serves as cofactor.

The protein resides in the cytoplasm. It carries out the reaction N(7)-methyl-GTP + H2O = N(7)-methyl-GMP + diphosphate + H(+). In terms of biological role, nucleoside triphosphate pyrophosphatase that hydrolyzes 7-methyl-GTP (m(7)GTP). May have a dual role in cell division arrest and in preventing the incorporation of modified nucleotides into cellular nucleic acids. The sequence is that of 7-methyl-GTP pyrophosphatase from Bordetella pertussis (strain Tohama I / ATCC BAA-589 / NCTC 13251).